A 315-amino-acid polypeptide reads, in one-letter code: DNA-directed RNA polymerase subunit alpha (315 aa).

An alpha N-terminal domain (alpha-NTD) region spans residues 1-228 (MIEMEKPKVE…EHLNLFITLK (228 aa)). The interval 245 to 315 (KEKVLEMTIE…LGLGLRPSDE (71 aa)) is alpha C-terminal domain (alpha-CTD).

Belongs to the RNA polymerase alpha chain family. Homodimer. The RNAP catalytic core consists of 2 alpha, 1 beta, 1 beta' and 1 omega subunit. When a sigma factor is associated with the core the holoenzyme is formed, which can initiate transcription.

The catalysed reaction is RNA(n) + a ribonucleoside 5'-triphosphate = RNA(n+1) + diphosphate. In terms of biological role, DNA-dependent RNA polymerase catalyzes the transcription of DNA into RNA using the four ribonucleoside triphosphates as substrates. This Alkaliphilus metalliredigens (strain QYMF) protein is DNA-directed RNA polymerase subunit alpha.